A 129-amino-acid polypeptide reads, in one-letter code: uncharacterized protein (129 aa).

The HIT domain occupies 3 to 109 (IFCKIINGEI…IPRYEGDGEV (107 aa)). The Histidine triad motif signature appears at 94–98 (HVHFH).

This is an uncharacterized protein from Methanocaldococcus jannaschii (strain ATCC 43067 / DSM 2661 / JAL-1 / JCM 10045 / NBRC 100440) (Methanococcus jannaschii).